The sequence spans 218 residues: Ribose-5-phosphate isomerase A (218 aa).

Residues 28-31 (TGST), 81-84 (DGAD), and 94-97 (KGGG) contribute to the substrate site. The Proton acceptor role is filled by E103. Substrate is bound at residue K121.

Belongs to the ribose 5-phosphate isomerase family. As to quaternary structure, homodimer.

The catalysed reaction is aldehydo-D-ribose 5-phosphate = D-ribulose 5-phosphate. It participates in carbohydrate degradation; pentose phosphate pathway; D-ribose 5-phosphate from D-ribulose 5-phosphate (non-oxidative stage): step 1/1. In terms of biological role, catalyzes the reversible conversion of ribose-5-phosphate to ribulose 5-phosphate. The chain is Ribose-5-phosphate isomerase A from Aliivibrio fischeri (strain ATCC 700601 / ES114) (Vibrio fischeri).